Reading from the N-terminus, the 256-residue chain is Ubiquinone/menaquinone biosynthesis C-methyltransferase UbiE (256 aa).

Residues 1–12 (MNDQRKGDHAEP) are compositionally biased toward basic and acidic residues. The interval 1-23 (MNDQRKGDHAEPTTHFGYQDVPE) is disordered. Residues Thr79, Asp100, and 128 to 129 (DA) contribute to the S-adenosyl-L-methionine site.

This sequence belongs to the class I-like SAM-binding methyltransferase superfamily. MenG/UbiE family.

It carries out the reaction a 2-demethylmenaquinol + S-adenosyl-L-methionine = a menaquinol + S-adenosyl-L-homocysteine + H(+). The enzyme catalyses a 2-methoxy-6-(all-trans-polyprenyl)benzene-1,4-diol + S-adenosyl-L-methionine = a 5-methoxy-2-methyl-3-(all-trans-polyprenyl)benzene-1,4-diol + S-adenosyl-L-homocysteine + H(+). It participates in quinol/quinone metabolism; menaquinone biosynthesis; menaquinol from 1,4-dihydroxy-2-naphthoate: step 2/2. It functions in the pathway cofactor biosynthesis; ubiquinone biosynthesis. In terms of biological role, methyltransferase required for the conversion of demethylmenaquinol (DMKH2) to menaquinol (MKH2) and the conversion of 2-polyprenyl-6-methoxy-1,4-benzoquinol (DDMQH2) to 2-polyprenyl-3-methyl-6-methoxy-1,4-benzoquinol (DMQH2). In Pseudomonas putida (strain GB-1), this protein is Ubiquinone/menaquinone biosynthesis C-methyltransferase UbiE.